We begin with the raw amino-acid sequence, 152 residues long: Putative aryl-alcohol dehydrogenase YFL057C (152 aa).

Belongs to the aldo/keto reductase family. Aldo/keto reductase 2 subfamily.

Its function is as follows. Putative aryl-alcohol dehydrogenase. The chain is Putative aryl-alcohol dehydrogenase YFL057C from Saccharomyces cerevisiae (strain ATCC 204508 / S288c) (Baker's yeast).